Reading from the N-terminus, the 629-residue chain is tRNA uridine 5-carboxymethylaminomethyl modification enzyme MnmG (629 aa).

FAD contacts are provided by residues 13–18 (GGGHAG), valine 125, and serine 180. 273–287 (GPRYCPSIEDKIHRF) contacts NAD(+). Glutamine 370 contributes to the FAD binding site.

The protein belongs to the MnmG family. As to quaternary structure, homodimer. Heterotetramer of two MnmE and two MnmG subunits. Requires FAD as cofactor.

Its subcellular location is the cytoplasm. NAD-binding protein involved in the addition of a carboxymethylaminomethyl (cmnm) group at the wobble position (U34) of certain tRNAs, forming tRNA-cmnm(5)s(2)U34. This chain is tRNA uridine 5-carboxymethylaminomethyl modification enzyme MnmG, found in Shewanella sp. (strain MR-7).